Consider the following 396-residue polypeptide: Activity-regulated cytoskeleton-associated protein (396 aa).

Residues 54-78 (SKQVERELKGLHRSVGKLENNLDGY) are a coiled coil. The interval 89–100 (KSIKACLCRCQE) is interaction with SH3GL1 or SH3GL3. The interaction with DNM2 stretch occupies residues 195–214 (QSWVPGEDGQPSPGVDTQIF). Phosphoserine is present on serine 260. Residues lysine 268 and lysine 269 each participate in a glycyl lysine isopeptide (Lys-Gly) (interchain with G-Cter in ubiquitin) cross-link. Phosphothreonine is present on threonine 278. Positions 358–396 (GLEQAAEPSVTPLPTEDETEALTPALTSESVASDRTQPE) are disordered. Polar residues predominate over residues 382–396 (ALTSESVASDRTQPE).

This sequence belongs to the ARC/ARG3.1 family. As to quaternary structure, homooligomer; homooligomerizes into virion-like capsids. Interacts with SH3GL1/endophilin-2, SH3GL3/endophilin-3 and DNM2/DYN2. Interacts with CAMK2B (in the kinase inactive state); leading to target ARC to inactive synapses. Interacts with PSEN1. Interacts with GRIN2A and GRIN2B; inhibiting homooligomerization. Palmitoylation anchors the protein into the membrane by allowing direct insertion into the hydrophobic core of the lipid bilayer. In terms of processing, ubiquitinated by UBE3A, leading to its degradation by the proteasome, thereby promoting AMPA receptors (AMPARs) expression at synapses. Ubiquitinated by RNF216 at Lys-268 and Lys-269 limiting ARC protein levels induced by synaptic activity and thus regulating ARC-dependent forms of synaptic plasticity. Post-translationally, phosphorylation at Ser-260 by CaMK2 prevents homooligomerization into virion-like capsids by disrupting an interaction surface essential for high-order oligomerization. Phosphorylation by CaMK2 inhibits synaptic activity. As to expression, expressed exclusively in certain parts of the brain including cortex and molecular layer of the hippocampus. Typically expressed at high level in a minority of neurons. Basal expression higher in cortex than in hippocampus, highest in visual cortex.

Its subcellular location is the extracellular vesicle membrane. The protein resides in the postsynaptic cell membrane. The protein localises to the synapse. It localises to the postsynaptic density. It is found in the early endosome membrane. Its subcellular location is the cell projection. The protein resides in the dendrite. The protein localises to the cytoplasm. It localises to the cytoskeleton. It is found in the cell cortex. Its subcellular location is the dendritic spine. The protein resides in the cytoplasmic vesicle. The protein localises to the secretory vesicle. It localises to the acrosome. It is found in the clathrin-coated vesicle membrane. Master regulator of synaptic plasticity that self-assembles into virion-like capsids that encapsulate RNAs and mediate intercellular RNA transfer in the nervous system. ARC protein is released from neurons in extracellular vesicles that mediate the transfer of ARC mRNA into new target cells, where ARC mRNA can undergo activity-dependent translation. ARC capsids are endocytosed and are able to transfer ARC mRNA into the cytoplasm of neurons. Acts as a key regulator of synaptic plasticity: required for protein synthesis-dependent forms of long-term potentiation (LTP) and depression (LTD) and for the formation of long-term memory. Regulates synaptic plasticity by promoting endocytosis of AMPA receptors (AMPARs) in response to synaptic activity: this endocytic pathway maintains levels of surface AMPARs in response to chronic changes in neuronal activity through synaptic scaling, thereby contributing to neuronal homeostasis. Acts as a postsynaptic mediator of activity-dependent synapse elimination in the developing cerebellum by mediating elimination of surplus climbing fiber synapses. Accumulates at weaker synapses, probably to prevent their undesired enhancement. This suggests that ARC-containing virion-like capsids may be required to eliminate synaptic material. Required to transduce experience into long-lasting changes in visual cortex plasticity and for long-term memory. Involved in postsynaptic trafficking and processing of amyloid-beta A4 (APP) via interaction with PSEN1. In addition to its role in synapses, also involved in the regulation of the immune system: specifically expressed in skin-migratory dendritic cells and regulates fast dendritic cell migration, thereby regulating T-cell activation. The protein is Activity-regulated cytoskeleton-associated protein of Rattus norvegicus (Rat).